Consider the following 289-residue polypeptide: D-alanine aminotransferase (289 aa).

A substrate-binding site is contributed by Tyr31. Arg50 provides a ligand contact to pyridoxal 5'-phosphate. Arg99 and His101 together coordinate substrate. Lys147 carries the N6-(pyridoxal phosphate)lysine modification. A pyridoxal 5'-phosphate-binding site is contributed by Glu179.

This sequence belongs to the class-IV pyridoxal-phosphate-dependent aminotransferase family. Homodimer. The cofactor is pyridoxal 5'-phosphate.

The catalysed reaction is D-alanine + 2-oxoglutarate = D-glutamate + pyruvate. Acts on the D-isomers of alanine, leucine, aspartate, glutamate, aminobutyrate, norvaline and asparagine. The enzyme transfers an amino group from a substrate D-amino acid to the pyridoxal phosphate cofactor to form pyridoxamine and an alpha-keto acid in the first half-reaction. The second half-reaction is the reverse of the first, transferring the amino group from the pyridoxamine to a second alpha-keto acid to form the product D-amino acid via a ping-pong mechanism. This is an important process in the formation of D-alanine and D-glutamate, which are essential bacterial cell wall components. The sequence is that of D-alanine aminotransferase (dat) from Listeria monocytogenes serotype 1/2a (strain 10403S).